Reading from the N-terminus, the 203-residue chain is Protein GrpE (203 aa).

Residues 1–20 (MSDNGDNNTKSPQHNNPQPN) show a composition bias toward polar residues. A disordered region spans residues 1-46 (MSDNGDNNTKSPQHNNPQPNEKSDGKVQPGQPQVNPQRKFTAGINK).

This sequence belongs to the GrpE family. Homodimer.

The protein resides in the cytoplasm. Participates actively in the response to hyperosmotic and heat shock by preventing the aggregation of stress-denatured proteins, in association with DnaK and GrpE. It is the nucleotide exchange factor for DnaK and may function as a thermosensor. Unfolded proteins bind initially to DnaJ; upon interaction with the DnaJ-bound protein, DnaK hydrolyzes its bound ATP, resulting in the formation of a stable complex. GrpE releases ADP from DnaK; ATP binding to DnaK triggers the release of the substrate protein, thus completing the reaction cycle. Several rounds of ATP-dependent interactions between DnaJ, DnaK and GrpE are required for fully efficient folding. The chain is Protein GrpE from Ehrlichia chaffeensis (strain ATCC CRL-10679 / Arkansas).